We begin with the raw amino-acid sequence, 430 residues long: Protein translocase subunit SecY (430 aa).

Transmembrane regions (helical) follow at residues 18-38 (VIFT…PVPG), 67-87 (FSIF…MQLL), 118-138 (IVLG…FFPG), 145-165 (VSVY…LMWL), 177-197 (GISI…LNLI), 213-233 (IVVI…VIFV), 270-290 (VIPV…AGLF), 309-329 (PIGM…YTFI), 369-389 (FVGS…IKFA), and 390-410 (DLPQ…GVAL).

This sequence belongs to the SecY/SEC61-alpha family. Component of the Sec protein translocase complex. Heterotrimer consisting of SecY, SecE and SecG subunits. The heterotrimers can form oligomers, although 1 heterotrimer is thought to be able to translocate proteins. Interacts with the ribosome. Interacts with SecDF, and other proteins may be involved. Interacts with SecA.

The protein resides in the cell membrane. Its function is as follows. The central subunit of the protein translocation channel SecYEG. Consists of two halves formed by TMs 1-5 and 6-10. These two domains form a lateral gate at the front which open onto the bilayer between TMs 2 and 7, and are clamped together by SecE at the back. The channel is closed by both a pore ring composed of hydrophobic SecY resides and a short helix (helix 2A) on the extracellular side of the membrane which forms a plug. The plug probably moves laterally to allow the channel to open. The ring and the pore may move independently. The polypeptide is Protein translocase subunit SecY (Halalkalibacterium halodurans (strain ATCC BAA-125 / DSM 18197 / FERM 7344 / JCM 9153 / C-125) (Bacillus halodurans)).